The chain runs to 89 residues: HssA/B-like protein 21 (89 aa).

It belongs to the hssA/B family.

The sequence is that of HssA/B-like protein 21 (hssl21) from Dictyostelium discoideum (Social amoeba).